A 101-amino-acid chain; its full sequence is Small ribosomal subunit protein uS10 (101 aa).

This sequence belongs to the universal ribosomal protein uS10 family. In terms of assembly, part of the 30S ribosomal subunit.

In terms of biological role, involved in the binding of tRNA to the ribosomes. The sequence is that of Small ribosomal subunit protein uS10 from Brachyspira pilosicoli (Serpulina pilosicoli).